We begin with the raw amino-acid sequence, 74 residues long: ATP synthase subunit 9, mitochondrial (74 aa).

2 helical membrane-spanning segments follow: residues M8–F28 and I50–I70.

This sequence belongs to the ATPase C chain family. In terms of assembly, F-type ATPases have 2 components, CF(1) - the catalytic core - and CF(0) - the membrane proton channel. CF(1) has five subunits: alpha(3), beta(3), gamma(1), delta(1), epsilon(1). CF(0) has three main subunits: a, b and c.

It localises to the mitochondrion membrane. Functionally, this protein is one of the chains of the nonenzymatic membrane component (F0) of mitochondrial ATPase. This is ATP synthase subunit 9, mitochondrial (ATP9) from Solanum lycopersicum (Tomato).